The following is a 322-amino-acid chain: Agmatinase (322 aa).

Positions 136, 160, 162, 164, 243, and 245 each coordinate Mn(2+).

This sequence belongs to the arginase family. Agmatinase subfamily. Mn(2+) is required as a cofactor.

It carries out the reaction agmatine + H2O = urea + putrescine. The protein operates within amine and polyamine biosynthesis; putrescine biosynthesis via agmatine pathway; putrescine from agmatine: step 1/1. Functionally, catalyzes the formation of putrescine from agmatine. This Chromobacterium violaceum (strain ATCC 12472 / DSM 30191 / JCM 1249 / CCUG 213 / NBRC 12614 / NCIMB 9131 / NCTC 9757 / MK) protein is Agmatinase.